The sequence spans 309 residues: Homoserine kinase (309 aa).

88–98 (PLARGLGSSAA) contacts ATP.

It belongs to the GHMP kinase family. Homoserine kinase subfamily.

The protein localises to the cytoplasm. The catalysed reaction is L-homoserine + ATP = O-phospho-L-homoserine + ADP + H(+). The protein operates within amino-acid biosynthesis; L-threonine biosynthesis; L-threonine from L-aspartate: step 4/5. Its function is as follows. Catalyzes the ATP-dependent phosphorylation of L-homoserine to L-homoserine phosphate. The protein is Homoserine kinase of Halalkalibacterium halodurans (strain ATCC BAA-125 / DSM 18197 / FERM 7344 / JCM 9153 / C-125) (Bacillus halodurans).